Consider the following 376-residue polypeptide: Erythronate-4-phosphate dehydrogenase (376 aa).

Positions 45 and 67 each coordinate substrate. Position 147 (D147) interacts with NAD(+). Residue R209 is part of the active site. D233 is a binding site for NAD(+). Residue E238 is part of the active site. H255 acts as the Proton donor in catalysis. G258 contributes to the NAD(+) binding site. Y259 provides a ligand contact to substrate.

This sequence belongs to the D-isomer specific 2-hydroxyacid dehydrogenase family. PdxB subfamily. In terms of assembly, homodimer.

The protein resides in the cytoplasm. It carries out the reaction 4-phospho-D-erythronate + NAD(+) = (R)-3-hydroxy-2-oxo-4-phosphooxybutanoate + NADH + H(+). It participates in cofactor biosynthesis; pyridoxine 5'-phosphate biosynthesis; pyridoxine 5'-phosphate from D-erythrose 4-phosphate: step 2/5. In terms of biological role, catalyzes the oxidation of erythronate-4-phosphate to 3-hydroxy-2-oxo-4-phosphonooxybutanoate. The protein is Erythronate-4-phosphate dehydrogenase of Shewanella baltica (strain OS155 / ATCC BAA-1091).